We begin with the raw amino-acid sequence, 512 residues long: Zinc metalloprotease mde10 (512 aa).

An N-terminal signal peptide occupies residues 1 to 15 (MRLVLLFSCVLAVSS). Residue Asn35 is glycosylated (N-linked (GlcNAc...) asparagine). Positions 65 to 306 (QTLWIGVVAD…KYVSLSCLSK (242 aa)) constitute a Peptidase M12B domain. Position 229 (His229) interacts with Zn(2+). Residue Glu230 is part of the active site. Positions 233 and 239 each coordinate Zn(2+). 2 disulfide bridges follow: Cys246-Cys254 and Cys374-Cys394. In terms of domain architecture, Disintegrin spans 315–402 (LGTCGNGIVE…KCPVDENWDD (88 aa)). Asn432 carries an N-linked (GlcNAc...) asparagine glycan.

Requires Zn(2+) as cofactor. In terms of processing, glycosylated.

It localises to the endoplasmic reticulum. Its subcellular location is the spore wall. Has a role in the development of the spore envelope. The sequence is that of Zinc metalloprotease mde10 (mde10) from Schizosaccharomyces pombe (strain 972 / ATCC 24843) (Fission yeast).